We begin with the raw amino-acid sequence, 69 residues long: U-scoloptoxin(21)-Sm2a (69 aa).

Residues 1 to 21 (MFFLGFIIVCASEEQSDNRLP) form the signal peptide. The tract at residues 46 to 69 (ANDPNGPGRRRRSPIVREEILRHP) is disordered. Positions 60–69 (IVREEILRHP) are enriched in basic and acidic residues.

It belongs to the scoloptoxin-21 family. In terms of tissue distribution, expressed by the venom gland.

It localises to the secreted. The polypeptide is U-scoloptoxin(21)-Sm2a (Scolopendra morsitans (Tanzanian blue ringleg centipede)).